Consider the following 355-residue polypeptide: Histidinol-phosphate aminotransferase (355 aa).

Lys-214 is modified (N6-(pyridoxal phosphate)lysine).

It belongs to the class-II pyridoxal-phosphate-dependent aminotransferase family. Histidinol-phosphate aminotransferase subfamily. As to quaternary structure, homodimer. Pyridoxal 5'-phosphate is required as a cofactor.

It catalyses the reaction L-histidinol phosphate + 2-oxoglutarate = 3-(imidazol-4-yl)-2-oxopropyl phosphate + L-glutamate. It functions in the pathway amino-acid biosynthesis; L-histidine biosynthesis; L-histidine from 5-phospho-alpha-D-ribose 1-diphosphate: step 7/9. The chain is Histidinol-phosphate aminotransferase (hisC) from Buchnera aphidicola subsp. Schizaphis graminum (strain Sg).